A 512-amino-acid chain; its full sequence is Bifunctional purine biosynthesis protein PurH (512 aa).

The MGS-like domain maps to 1-144 (MKRALVSVSD…KNYRDVVVVV (144 aa)).

Belongs to the PurH family.

It catalyses the reaction (6R)-10-formyltetrahydrofolate + 5-amino-1-(5-phospho-beta-D-ribosyl)imidazole-4-carboxamide = 5-formamido-1-(5-phospho-D-ribosyl)imidazole-4-carboxamide + (6S)-5,6,7,8-tetrahydrofolate. The enzyme catalyses IMP + H2O = 5-formamido-1-(5-phospho-D-ribosyl)imidazole-4-carboxamide. Its pathway is purine metabolism; IMP biosynthesis via de novo pathway; 5-formamido-1-(5-phospho-D-ribosyl)imidazole-4-carboxamide from 5-amino-1-(5-phospho-D-ribosyl)imidazole-4-carboxamide (10-formyl THF route): step 1/1. The protein operates within purine metabolism; IMP biosynthesis via de novo pathway; IMP from 5-formamido-1-(5-phospho-D-ribosyl)imidazole-4-carboxamide: step 1/1. The polypeptide is Bifunctional purine biosynthesis protein PurH (Ligilactobacillus salivarius (strain UCC118) (Lactobacillus salivarius)).